Here is a 38-residue protein sequence, read N- to C-terminus: Large ribosomal subunit protein bL36 (38 aa).

The protein belongs to the bacterial ribosomal protein bL36 family.

This is Large ribosomal subunit protein bL36 from Roseiflexus castenholzii (strain DSM 13941 / HLO8).